A 464-amino-acid polypeptide reads, in one-letter code: Molybdate transporter 2 (464 aa).

Residues Leu8–Leu9 carry the Tonoplast targeting signal motif. A run of 9 helical transmembrane segments spans residues Leu33–Val53, Leu62–Val82, Leu116–Val136, Ile172–Ser192, Leu223–Ile243, Val309–Cys329, Ser348–Val368, Phe374–Ser394, and Phe404–Gly424.

The protein belongs to the SLC26A/SulP transporter (TC 2.A.53) family. As to expression, expressed in leaves. Not detected in roots, shoots and seeds.

It is found in the vacuole membrane. Functionally, molybdate transporter required for vacuolar molybdate export during senescence. The polypeptide is Molybdate transporter 2 (MOT2) (Arabidopsis thaliana (Mouse-ear cress)).